Reading from the N-terminus, the 156-residue chain is Histone acetyltransferase HPA2 (156 aa).

In terms of domain architecture, N-acetyltransferase spans 9 to 156 (ITVRFVTEND…PKILYKRKGY (148 aa)). 93 to 106 (LYVDENSRVKGAGG) contributes to the acetyl-CoA binding site.

Belongs to the acetyltransferase family. GNAT subfamily. As to quaternary structure, forms homodimers in the absence, and homotetramers in the presence of acetyl-CoA. In terms of processing, autoacetylates in an intermolecular reaction.

It catalyses the reaction L-lysyl-[protein] + acetyl-CoA = N(6)-acetyl-L-lysyl-[protein] + CoA + H(+). In terms of biological role, N-acetyltransferase that acetylates histone H3 at 'Lys-14' and histone H4 at 'Lys-5' and 'Lys-12'. Also acetylates polyamines like putrescine, spermidine and spermine, and certain other small basic proteins like nuclear HMG proteins. This is Histone acetyltransferase HPA2 from Saccharomyces cerevisiae (strain ATCC 204508 / S288c) (Baker's yeast).